Here is a 686-residue protein sequence, read N- to C-terminus: Translation initiation factor IF-2 (686 aa).

The segment at 54-105 (KPSVADEFEVEEKVVRSKKNSNKKKKKGKGNEDKRQENFAGRQQTQTVETPD) is disordered. Basic residues predominate over residues 69–81 (RSKKNSNKKKKKG). A tr-type G domain is found at 188 to 357 (ERPAVVTIMG…LLVSEVEEYK (170 aa)). Positions 197-204 (GHVDHGKT) are G1. 197–204 (GHVDHGKT) serves as a coordination point for GTP. Positions 222 to 226 (GITQH) are G2. The segment at 243 to 246 (DTPG) is G3. Residues 243–247 (DTPGH) and 297–300 (NKMD) contribute to the GTP site. The G4 stretch occupies residues 297–300 (NKMD). The G5 stretch occupies residues 333-335 (SAI).

It belongs to the TRAFAC class translation factor GTPase superfamily. Classic translation factor GTPase family. IF-2 subfamily.

The protein localises to the cytoplasm. Its function is as follows. One of the essential components for the initiation of protein synthesis. Protects formylmethionyl-tRNA from spontaneous hydrolysis and promotes its binding to the 30S ribosomal subunits. Also involved in the hydrolysis of GTP during the formation of the 70S ribosomal complex. This is Translation initiation factor IF-2 from Bacillus cereus (strain 03BB102).